The sequence spans 102 residues: Glycoprotein 24A (102 aa).

This sequence belongs to the csb family. O-glycosylated.

Its subcellular location is the cell surface. Cell-cell adhesion during early development. This Dictyostelium discoideum (Social amoeba) protein is Glycoprotein 24A (csbA).